A 240-amino-acid chain; its full sequence is Endo-chitosanase B (240 aa).

Residues 1-17 form the signal peptide; the sequence is MRLSEILAVALVTGATA. N-linked (GlcNAc...) asparagine glycosylation occurs at asparagine 86.

It belongs to the glycosyl hydrolase 75 family.

Its subcellular location is the secreted. The enzyme catalyses Endohydrolysis of beta-(1-&gt;4)-linkages between D-glucosamine residues in a partly acetylated chitosan.. Its function is as follows. Chitosanase catalyzing the endo-type cleavage of chitosan, the deacylated form of chitin. Chitosanase may be crucial in the degradation of the deacetylated portion of chitin in the fungal cell wall. Chitoolisaccharides produced by the hydrolysis of partially N-acetylated chitosan are known to have many biological activities, including antibacterial activity, immune-enhancing effects, and elicitor activity. This is Endo-chitosanase B (csnB) from Aspergillus oryzae (Yellow koji mold).